We begin with the raw amino-acid sequence, 157 residues long: Endoribonuclease YbeY (157 aa).

Zn(2+)-binding residues include His115, His119, and His125.

It belongs to the endoribonuclease YbeY family. Zn(2+) is required as a cofactor.

The protein resides in the cytoplasm. In terms of biological role, single strand-specific metallo-endoribonuclease involved in late-stage 70S ribosome quality control and in maturation of the 3' terminus of the 16S rRNA. The protein is Endoribonuclease YbeY of Micrococcus luteus (strain ATCC 4698 / DSM 20030 / JCM 1464 / CCM 169 / CCUG 5858 / IAM 1056 / NBRC 3333 / NCIMB 9278 / NCTC 2665 / VKM Ac-2230) (Micrococcus lysodeikticus).